The sequence spans 219 residues: N-(5'-phosphoribosyl)anthranilate isomerase (219 aa).

The protein belongs to the TrpF family.

It carries out the reaction N-(5-phospho-beta-D-ribosyl)anthranilate = 1-(2-carboxyphenylamino)-1-deoxy-D-ribulose 5-phosphate. Its pathway is amino-acid biosynthesis; L-tryptophan biosynthesis; L-tryptophan from chorismate: step 3/5. The chain is N-(5'-phosphoribosyl)anthranilate isomerase from Bordetella avium (strain 197N).